Here is a 132-residue protein sequence, read N- to C-terminus: Small ribosomal subunit protein uS8 (132 aa).

This sequence belongs to the universal ribosomal protein uS8 family. As to quaternary structure, part of the 30S ribosomal subunit. Contacts proteins S5 and S12.

Its function is as follows. One of the primary rRNA binding proteins, it binds directly to 16S rRNA central domain where it helps coordinate assembly of the platform of the 30S subunit. This is Small ribosomal subunit protein uS8 from Allorhizobium ampelinum (strain ATCC BAA-846 / DSM 112012 / S4) (Agrobacterium vitis (strain S4)).